A 313-amino-acid polypeptide reads, in one-letter code: Fucose-specific lectin (313 aa).

6 repeat units span residues 5–57 (FLYT…VIGE), 58–109 (AKLF…VGVK), 110–162 (VGSN…SFGS), 163–208 (TVPG…FSAS), 209–260 (ASAG…RPTP), and 261–304 (SLPD…IGAV). The segment at 5-304 (FLYTSKIAAI…SGKGWSIGAV (300 aa)) is 6 X approximate tandem repeats. Residues Arg-25, Glu-37, Arg-78, Glu-90, Trp-98, Gln-102, Arg-132, Glu-147, and Trp-154 each coordinate beta-L-fucose. Arg-78 and Glu-90 together coordinate alpha-L-fucose. Gln-102 provides a ligand contact to alpha-L-fucose. Trp-154, Arg-180, and Glu-192 together coordinate alpha-L-fucose. Trp-200 contributes to the beta-L-fucose binding site. Gly-204 serves as a coordination point for alpha-L-fucose. Residues Arg-227 and Glu-239 each contribute to the beta-L-fucose site. Residue Trp-246 participates in alpha-L-fucose binding. Beta-L-fucose is bound at residue Trp-299.

This sequence belongs to the fungal fucose-specific lectin family. As to quaternary structure, forms homodimers. The two AAL monomers are associated via interactions between N-terminal and C-terminal peptides. Tyr-7 interacts via aromatic ring stacking with its counterpart on the other monomer, whereas Ser-284 interacts via hydrogen bonding with Asp-264 on the other monomer.

Lectin that specifically binds to L-fucose. Has strongest preference for the alpha-1,6-fucosylated chain (core fucose) on glycoproteins among alpha-1,2-, alpha-1,3-, alpha-1,4-, and alpha-1,6-fucosylated chains. Might play a role in the differentiation of the fruiting body. Exhibits antifungal activity against Mucor racemosus and thus could act as an antifungal protein in natural ecosystems. The polypeptide is Fucose-specific lectin (Aleuria aurantia (Orange peel mushroom)).